Here is a 137-residue protein sequence, read N- to C-terminus: Large ribosomal subunit protein uL16 (137 aa).

This sequence belongs to the universal ribosomal protein uL16 family. Part of the 50S ribosomal subunit.

In terms of biological role, binds 23S rRNA and is also seen to make contacts with the A and possibly P site tRNAs. The chain is Large ribosomal subunit protein uL16 from Methylococcus capsulatus (strain ATCC 33009 / NCIMB 11132 / Bath).